The primary structure comprises 107 residues: U1-lycotoxin-Ls1c (107 aa).

Residues 1–20 (MMKVLVVVALLVTLISYSSS) form the signal peptide. Positions 21–41 (EGIDDLEADELLSLMANEQTR) are excised as a propeptide. 4 cysteine pairs are disulfide-bonded: cysteine 44/cysteine 59, cysteine 51/cysteine 68, cysteine 58/cysteine 86, and cysteine 70/cysteine 84.

The protein belongs to the neurotoxin 19 (CSTX) family. 04 (U1-Lctx) subfamily. In terms of tissue distribution, expressed by the venom gland.

It is found in the secreted. In Lycosa singoriensis (Wolf spider), this protein is U1-lycotoxin-Ls1c.